The sequence spans 406 residues: Testis-specific Y-encoded-like protein 4 (406 aa).

Disordered regions lie at residues 1–63, 81–121, 161–189, and 387–406; these read MNGV…EHCG, GLED…AKPK, EAGAAMQEKKGLQKEKKVAGGGKEETRPR, and VRVPPRQPVESPRSFRFQSG. Residues 8 to 20 are compositionally biased toward polar residues; it reads NELSLANTTTPSH. Positions 93–102 are enriched in low complexity; it reads DAPSAPVAAD. Residues 167 to 188 show a composition bias toward basic and acidic residues; it reads QEKKGLQKEKKVAGGGKEETRP.

Belongs to the nucleosome assembly protein (NAP) family.

The polypeptide is Testis-specific Y-encoded-like protein 4 (Tspyl4) (Mus musculus (Mouse)).